The following is a 360-amino-acid chain: 3-dehydroquinate synthase (360 aa).

Residues 105–109, 129–130, lysine 142, lysine 151, and 169–172 contribute to the NAD(+) site; these read GVVGD, TT, and TLKT. Zn(2+)-binding residues include glutamate 184, histidine 247, and histidine 263.

The protein belongs to the sugar phosphate cyclases superfamily. Dehydroquinate synthase family. The cofactor is Co(2+). Zn(2+) is required as a cofactor. Requires NAD(+) as cofactor.

Its subcellular location is the cytoplasm. The catalysed reaction is 7-phospho-2-dehydro-3-deoxy-D-arabino-heptonate = 3-dehydroquinate + phosphate. It functions in the pathway metabolic intermediate biosynthesis; chorismate biosynthesis; chorismate from D-erythrose 4-phosphate and phosphoenolpyruvate: step 2/7. Functionally, catalyzes the conversion of 3-deoxy-D-arabino-heptulosonate 7-phosphate (DAHP) to dehydroquinate (DHQ). The polypeptide is 3-dehydroquinate synthase (Acetivibrio thermocellus (strain ATCC 27405 / DSM 1237 / JCM 9322 / NBRC 103400 / NCIMB 10682 / NRRL B-4536 / VPI 7372) (Clostridium thermocellum)).